The primary structure comprises 398 residues: Metal tolerance protein 1 (398 aa).

Topologically, residues 1-56 (MESSSPHHSHIVEVNVGKSDEERIIVASKVCGEAPCGFSDSKNASGDAHERSASMR) are cytoplasmic. A helical membrane pass occupies residues 57–77 (KLCIAVVLCLVFMSVEVVGGI). Topologically, residues 78–89 (KANSLAILTDAA) are vacuolar. Residues 90-110 (HLLSDVAAFAISLFSLWAAGW) traverse the membrane as a helical segment. The Cytoplasmic portion of the chain corresponds to 111–122 (EATPRQTYGFFR). A helical membrane pass occupies residues 123 to 143 (IEILGALVSIQLIWLLTGILV). At 144 to 159 (YEAIIRIVTETSEVNG) the chain is on the vacuolar side. A helical membrane pass occupies residues 160-180 (FLMFLVAAFGLVVNIIMAVLL). Over 181–263 (GHDHGHSHGH…KRNINLQGAY (83 aa)) the chain is Cytoplasmic. The required for zinc-binding stretch occupies residues 182–232 (HDHGHSHGHGHGHGHDHHNHSHGVTVTTHHHHHDHEHGHSHGHGEDKHHAH). The interval 186–232 (HSHGHGHGHGHDHHNHSHGVTVTTHHHHHDHEHGHSHGHGEDKHHAH) is disordered. Over residues 187–202 (SHGHGHGHGHDHHNHS) the composition is skewed to basic residues. Basic and acidic residues predominate over residues 216-232 (HEHGHSHGHGEDKHHAH). Residues 264–284 (LHVLGDSIQSVGVMIGGAIIW) traverse the membrane as a helical segment. Residues 285 to 290 (YNPEWK) are Vacuolar-facing. Residues 291–311 (IVDLICTLAFSVIVLGTTINM) traverse the membrane as a helical segment. Residues 312–398 (IRNILEVLME…ISHVTIQIER (87 aa)) lie on the Cytoplasmic side of the membrane.

It belongs to the cation diffusion facilitator (CDF) transporter (TC 2.A.4) family. SLC30A subfamily. As to expression, ubiquitously expressed at low levels.

It localises to the vacuole membrane. In terms of biological role, mediates zinc accumulation in roots and confers resistance to zinc. Involved in sequestration of excess zinc in the cytoplasm into vacuoles to maintain zinc homeostasis. Can also transport cadmium with a low efficiency. This is Metal tolerance protein 1 from Arabidopsis thaliana (Mouse-ear cress).